A 446-amino-acid polypeptide reads, in one-letter code: Neuropeptide Y receptor type 5 (446 aa).

The Extracellular segment spans residues 1 to 42 (MDLELQDFYNKTLATENNTAATRNSDFPVWDDYKSSVDDLQY). 2 N-linked (GlcNAc...) asparagine glycosylation sites follow: Asn-10 and Asn-17. The chain crosses the membrane as a helical span at residues 43–63 (FLIGLYTFVSLLGFMGNLLIL). At 64–77 (MALMRKRNQKTMVN) the chain is on the cytoplasmic side. The chain crosses the membrane as a helical span at residues 78–98 (FLIGNLAFSDILVVLFCSPFT). Residues 99–117 (LTSVLLDQWMFGKVMCHIM) lie on the Extracellular side of the membrane. Cys-114 and Cys-198 are disulfide-bonded. Residues 118–138 (PFLQCVSVLVSTLILISIAIV) form a helical membrane-spanning segment. Residues 139–156 (RYHMIKHPISNNLTANHG) lie on the Cytoplasmic side of the membrane. A helical membrane pass occupies residues 157–177 (YFLIATVWTLGFAICSPLPVF). At 178-208 (HSLVELQETFDSALLSSRYLCVESWPSDSYR) the chain is on the extracellular side. The chain crosses the membrane as a helical span at residues 209–229 (IAFTISLLLVQYILPLVCLTV). Topologically, residues 230-369 (SHTSVCRSIS…KKRSRSVFYR (140 aa)) are cytoplasmic. A helical membrane pass occupies residues 370 to 390 (LTILILVFAVSWMPLHLFHVV). Topologically, residues 391 to 407 (TDFNDNLISNRHFKLVY) are extracellular. Residues 408–428 (CICHLLGMMSCCLNPILYGFL) form a helical membrane-spanning segment. Residues 429–446 (NNGIKADLISLIQCLHMS) lie on the Cytoplasmic side of the membrane. Cys-442 is lipidated: S-palmitoyl cysteine.

Belongs to the G-protein coupled receptor 1 family.

It is found in the cell membrane. Functionally, receptor for neuropeptide Y and peptide YY. The activity of this receptor is mediated by G proteins that inhibit adenylate cyclase activity. Seems to be associated with food intake. Could be involved in feeding disorders. This is Neuropeptide Y receptor type 5 (NPY5R) from Canis lupus familiaris (Dog).